An 89-amino-acid chain; its full sequence is Small ribosomal subunit protein uS15 (89 aa).

This sequence belongs to the universal ribosomal protein uS15 family. In terms of assembly, part of the 30S ribosomal subunit. Forms a bridge to the 50S subunit in the 70S ribosome, contacting the 23S rRNA.

One of the primary rRNA binding proteins, it binds directly to 16S rRNA where it helps nucleate assembly of the platform of the 30S subunit by binding and bridging several RNA helices of the 16S rRNA. Functionally, forms an intersubunit bridge (bridge B4) with the 23S rRNA of the 50S subunit in the ribosome. This chain is Small ribosomal subunit protein uS15, found in Parvibaculum lavamentivorans (strain DS-1 / DSM 13023 / NCIMB 13966).